A 1051-amino-acid chain; its full sequence is MADIANYKDAASNRHLRFKLQSLSRRLDELEEATKNLQKAEDELLDLQDKVIQAEGSNSSMLAEIEVLRQRVLKIEGKDEEIKRAEDLCHTMKEKLEEEENLTRELKSEIDRLQKRMADLEKLEEALSRSKNECSQLCLSLNEERNLTKKISSELEMLRVKVKELESSEDRLEKTEQSLVSELEKLKSLTLSFVNERKYLNEKEKENEKLIKELTQKLEQNKKINRDHMRNASTFLERNDLRIEDGISSTLPSKESRRKGSLDYLKQVENETRDKSENEKNRNQEDNKVKDLNQEIEKLKTQIKHFESLEEELKKMRAKNNDLQDNYLTELNKNRSLASQLEEVKLQVKKQKELGNGDIEGEDAFLLGRGRHERTKLKGHGGEVSVSKHTSREQSPQHKRERLRNRGFALNDEHCSLSNKQVSSPAFTNKRAAKASNMGVGPDSGTQETKRTEDRLAPGSSQSEGKKGREQPSVLSRYPPAAQDHTKVWRGNPKPGTESGLKGKVEKTTRTFSDSAHGSVPNDVVGKGDKTSDFSSEAHCGKRGQVPGHASQVTQVAESGCSKAIGALASSQRASSEGLSKGKKAANGLETDANFPHSKAPILSKYPYSSRSQENILQGFSVPNKEGVDHSVAVVMEDSSQHEALRCRVIKSSGREKPDSDDDLDIESLVTAKLVNTTITPEPEPKLQPNSREKVKSRGGTRTPLFENDKNAAVENDSAKSMRSSSNAVEFPDANCAGVKNQRPFSPREALRSRAIIKPVIIDKDVKKIMGGSGTEVVLEKQKSTPKSVTSKVTSSITIYPSDSSGPRAVPTEAPRERHTSTSNIQVGPPELTSVSNHISSPLELSIHKHDITLQLTEAERVGDGSPKNRAETVVSRSSILIKPSDSVERNSHAFPAETIRWKSHSTSSEVASSDTRHITVRNAWKSKRDLKCSEDPPTRIGRNVEATNAYTQRSSTDFLELEQPRSHPPEQGTRKVGNSGDAPELSSRRTQSSLTASEVLTRRNRIGDAVTAASWNHSSNVVSLTFLPSALICLTEDLGNTEGWEMLNLR.

Residue Ala2 is modified to N-acetylalanine. The stretch at 11 to 354 (ASNRHLRFKL…KLQVKKQKEL (344 aa)) forms a coiled coil. Disordered stretches follow at residues 247–293 (ISST…KDLN), 374–401 (RTKLKGHGGEVSVSKHTSREQSPQHKRE), 432–554 (AAKA…SQVT), and 569–601 (ASSQRASSEGLSKGKKAANGLETDANFPHSKAP). The span at 254 to 293 (KESRRKGSLDYLKQVENETRDKSENEKNRNQEDNKVKDLN) shows a compositional bias: basic and acidic residues. Residues Ser256, Ser261, Ser395, Ser513, Ser571, Ser575, Ser612, and Ser660 each carry the phosphoserine modification. Over residues 569–578 (ASSQRASSEG) the composition is skewed to polar residues. The interval 675-727 (VNTTITPEPEPKLQPNSREKVKSRGGTRTPLFENDKNAAVENDSAKSMRSSSN) is disordered. Residue Thr680 is modified to Phosphothreonine. Ser691 bears the Phosphoserine mark. The span at 707 to 720 (ENDKNAAVENDSAK) shows a compositional bias: basic and acidic residues. The residue at position 746 (Ser746) is a Phosphoserine. Low complexity predominate over residues 789 to 799 (VTSKVTSSITI). Residues 789 to 837 (VTSKVTSSITIYPSDSSGPRAVPTEAPRERHTSTSNIQVGPPELTSVSN) are disordered. A required for interaction with FLNA region spans residues 834–884 (SVSNHISSPLELSIHKHDITLQLTEAERVGDGSPKNRAETVVSRSSILIKP). Ser906 carries the post-translational modification Phosphoserine. Basic and acidic residues predominate over residues 929–938 (RDLKCSEDPP). Residues 929-1000 (RDLKCSEDPP…TQSSLTASEV (72 aa)) form a disordered region. Composition is skewed to polar residues over residues 946–958 (EATNAYTQRSSTD) and 989–999 (RRTQSSLTASE). A Phosphothreonine modification is found at Thr957. Position 993 is a phosphoserine (Ser993).

In terms of assembly, component of the CERF-1 ISWI chromatin remodeling complex (also called the CECR2-containing remodeling factor (CERF) complex) at least composed of CECR2 and SMARCA1. Component of the CERF-5 ISWI chromatin remodeling complex at least composed of CECR2 and SMARCA5/SNF2H. LUZP1 is detected as part of the CERF-1 and CERF-5 complexes in embryonic stem (ES) cells where it is involved in complex stabilization but is not detected in the complexes in the testis. Interacts (via C-terminus) with LIMA1/EPLIN; both proteins restrict ciliation and may work together to regulate this process. Interacts with myosin light chain MYL9; the interaction results in inhibition of phosphorylation of MYL9 by DAPK3. Interacts with DAPK3; the interaction is likely to occur throughout the cell cycle and reduces the LUZP1-mediated suppression of MYL9 phosphorylation. Interacts with the chromosomal passenger complex (CPC); CPC kinase activity is required for localization of LUZP1 to the centromere. As to expression, expressed in cerebral cortex, cerebellum, hippocampus and brain stem.

It localises to the cytoplasm. The protein localises to the cytoskeleton. Its subcellular location is the microtubule organizing center. It is found in the centrosome. The protein resides in the cilium basal body. It localises to the midbody. The protein localises to the chromosome. Its subcellular location is the centromere. It is found in the spindle. The protein resides in the stress fiber. It localises to the nucleus. The protein localises to the cell projection. Its subcellular location is the dendrite. It is found in the perikaryon. The protein resides in the cell junction. It localises to the tight junction. Its function is as follows. F-actin cross-linking protein. Stabilizes actin and acts as a negative regulator of primary cilium formation. Positively regulates the phosphorylation of both myosin II and protein phosphatase 1 regulatory subunit PPP1R12A/MYPT1 and promotes the assembly of myosin II stacks within actin stress fibers. Inhibits the phosphorylation of myosin light chain MYL9 by DAPK3 and suppresses the constriction velocity of the contractile ring during cytokinesis. Binds to microtubules and promotes epithelial cell apical constriction by up-regulating levels of diphosphorylated myosin light chain (MLC) through microtubule-dependent inhibition of MLC dephosphorylation by myosin phosphatase. Involved in regulation of cell migration, nuclear size and centriole number, probably through regulation of the actin cytoskeleton. Component of the CERF-1 and CERF-5 chromatin remodeling complexes in embryonic stem cells where it acts to stabilize the complexes. Plays a role in embryonic brain and cardiovascular development. This chain is Leucine zipper protein 1 (Luzp1), found in Rattus norvegicus (Rat).